The chain runs to 155 residues: Deoxyuridine 5'-triphosphate nucleotidohydrolase (155 aa).

Residues 72–74 (RSG), Asn85, 89–91 (TVD), and Lys99 contribute to the substrate site.

This sequence belongs to the dUTPase family. Mg(2+) is required as a cofactor.

It carries out the reaction dUTP + H2O = dUMP + diphosphate + H(+). The protein operates within pyrimidine metabolism; dUMP biosynthesis; dUMP from dCTP (dUTP route): step 2/2. Its function is as follows. This enzyme is involved in nucleotide metabolism: it produces dUMP, the immediate precursor of thymidine nucleotides and it decreases the intracellular concentration of dUTP so that uracil cannot be incorporated into DNA. The protein is Deoxyuridine 5'-triphosphate nucleotidohydrolase of Parvibaculum lavamentivorans (strain DS-1 / DSM 13023 / NCIMB 13966).